Consider the following 358-residue polypeptide: Nicotinate-nucleotide--dimethylbenzimidazole phosphoribosyltransferase (358 aa).

The active-site Proton acceptor is Glu-313.

It belongs to the CobT family.

It catalyses the reaction 5,6-dimethylbenzimidazole + nicotinate beta-D-ribonucleotide = alpha-ribazole 5'-phosphate + nicotinate + H(+). It participates in nucleoside biosynthesis; alpha-ribazole biosynthesis; alpha-ribazole from 5,6-dimethylbenzimidazole: step 1/2. Functionally, catalyzes the synthesis of alpha-ribazole-5'-phosphate from nicotinate mononucleotide (NAMN) and 5,6-dimethylbenzimidazole (DMB). The chain is Nicotinate-nucleotide--dimethylbenzimidazole phosphoribosyltransferase from Corynebacterium glutamicum (strain R).